A 604-amino-acid polypeptide reads, in one-letter code: Aspartate--tRNA(Asp/Asn) ligase (604 aa).

Glu-187 lines the L-aspartate pocket. The interval 211–214 is aspartate; sequence QQFK. Positions 233 and 461 each coordinate L-aspartate. 233 to 235 is an ATP binding site; the sequence is RDE. Residue Glu-495 coordinates ATP. Arg-502 contacts L-aspartate. An ATP-binding site is contributed by 547–550; it reads GLDR.

It belongs to the class-II aminoacyl-tRNA synthetase family. Type 1 subfamily. In terms of assembly, homodimer.

The protein resides in the cytoplasm. The enzyme catalyses tRNA(Asx) + L-aspartate + ATP = L-aspartyl-tRNA(Asx) + AMP + diphosphate. Aspartyl-tRNA synthetase with relaxed tRNA specificity since it is able to aspartylate not only its cognate tRNA(Asp) but also tRNA(Asn). Reaction proceeds in two steps: L-aspartate is first activated by ATP to form Asp-AMP and then transferred to the acceptor end of tRNA(Asp/Asn). This chain is Aspartate--tRNA(Asp/Asn) ligase, found in Chlorobium luteolum (strain DSM 273 / BCRC 81028 / 2530) (Pelodictyon luteolum).